A 782-amino-acid chain; its full sequence is uncharacterized protein (782 aa).

3 disordered regions span residues 1-127 (MTTT…SAMK), 205-234 (NAAASQVNNRSNTSNSFDSHTTQKAGSYNP), and 308-355 (PYNF…SYLR). The span at 24–54 (KPQEEPTMKDKALLFEKQRQEKKMKHTEAKM) shows a compositional bias: basic and acidic residues. The span at 82–118 (KNVNNATSTNNATSTKNNTKNTPKNTPKNIPKNTTAK) shows a compositional bias: low complexity. A compositionally biased stretch (polar residues) spans 312–324 (ARNNHGSDVSSAM). Basic and acidic residues predominate over residues 326–336 (NARRQASETRR). A compositionally biased stretch (polar residues) spans 337 to 346 (SNLSSYNDRN). Positions 361–628 (MEKIRTEVDK…ERLRERLREL (268 aa)) form a coiled coil. Positions 629–668 (GSRDRSYNRSSRDRSHDRLYERSPRSRDRSSRDRSRDRYS) are enriched in basic and acidic residues. The disordered stretch occupies residues 629 to 689 (GSRDRSYNRS…SDSVKDYSVG (61 aa)). The span at 669–678 (RSRSRSRYRR) shows a compositional bias: basic residues. Residues 679–689 (RSDSVKDYSVG) show a composition bias toward basic and acidic residues.

This is an uncharacterized protein from Yarrowia lipolytica (strain CLIB 122 / E 150) (Yeast).